Reading from the N-terminus, the 113-residue chain is Hydrogenase maturation factor HypA (113 aa).

His-2 contacts Ni(2+). The Zn(2+) site is built by Cys-73, Cys-76, Cys-89, and Cys-92.

This sequence belongs to the HypA/HybF family.

Functionally, involved in the maturation of [NiFe] hydrogenases. Required for nickel insertion into the metal center of the hydrogenase. The chain is Hydrogenase maturation factor HypA from Paracoccus denitrificans (strain Pd 1222).